The following is a 164-amino-acid chain: Bacterial ferritin (164 aa).

Positions 1–147 (MKGKKSVISR…QQLGLIARMG (147 aa)) constitute a Ferritin-like diiron domain. Fe cation-binding residues include Glu-18, Glu-51, His-54, Glu-94, Glu-129, and His-132.

This sequence belongs to the bacterioferritin family. In terms of assembly, heterooligomer of 24 subunits, arranged as 12 dimers, that are packed together to form an approximately spherical molecule with a central cavity, in which large amounts of iron can be deposited.

It carries out the reaction 4 Fe(2+) + O2 + 4 H(+) = 4 Fe(3+) + 2 H2O. The enzyme catalyses Fe(2+)(in) = Fe(2+)(out). Its function is as follows. Iron-storage protein, whose ferroxidase center binds Fe(2+), oxidizes it using dioxygen to Fe(3+), and participates in the subsequent Fe(3+) oxide mineral core formation within the central cavity of the BFR protein shell. The polypeptide is Bacterial ferritin (Paramagnetospirillum magnetotacticum (Aquaspirillum magnetotacticum)).